A 467-amino-acid polypeptide reads, in one-letter code: Megakaryocyte-associated tyrosine-protein kinase (467 aa).

Positions 1 to 20 (MPTQRWAPGTQCMTKCENSR) are disordered. Residues 7–69 (APGTQCMTKC…AAAALRQREA (63 aa)) form the SH3 domain. The region spanning 81–170 (WFHGKISGQE…AICTKLVKPK (90 aa)) is the SH2 domain. Residues 194 to 443 (LTLGAQIGEG…IVEKLGRELR (250 aa)) form the Protein kinase domain. Residues 200–208 (IGEGEFGAV) and Lys-221 each bind ATP. Asp-311 functions as the Proton acceptor in the catalytic mechanism. The disordered stretch occupies residues 445–467 (VGVAAPAGGQEAEGSAPTRSQDP).

The protein belongs to the protein kinase superfamily. Tyr protein kinase family. CSK subfamily. In terms of assembly, interacts with KIT. In terms of tissue distribution, enriched in lymphoid tissues.

The protein resides in the cytoplasm. It is found in the membrane. It carries out the reaction L-tyrosyl-[protein] + ATP = O-phospho-L-tyrosyl-[protein] + ADP + H(+). In terms of biological role, could play a significant role in the signal transduction of hematopoietic cells. May regulate tyrosine kinase activity of SRC-family members in brain. The sequence is that of Megakaryocyte-associated tyrosine-protein kinase (Matk) from Rattus norvegicus (Rat).